The following is a 256-amino-acid chain: MVYGELIYHPVVTKLLKFLDSSASREKLLRLLQYLCRFLTFYTFKRNFNIETIQLIKKIQSSIGISRKPLRFLKNLPHLKNLNKIYSNELLDSTLKIGDLIKNFGYALYFQFDTLQWLKLLGLLTSKNSGSLYFKIDKLAANFWLIGLTGSIITDLRNLKISYDSNKALLNEINSQNNNSNNDTLDEKLIEQNNDLILKNNEKINLNKRDLFKNILDSLIALKGSQLIDLNDGVLGFAGIITSIIGIEDIWNATKA.

It belongs to the peroxin-11 family.

It localises to the peroxisome membrane. Its function is as follows. Involved in peroxisomal proliferation. Could participate in peroxisomal elongation or fission. May be involved in parceling of peroxisomes into regular quanta. This chain is Peroxisomal membrane protein PMP30B (PEX11B), found in Candida boidinii (Yeast).